We begin with the raw amino-acid sequence, 155 residues long: 2-C-methyl-D-erythritol 2,4-cyclodiphosphate synthase (155 aa).

Asp-9 and His-11 together coordinate a divalent metal cation. 4-CDP-2-C-methyl-D-erythritol 2-phosphate is bound by residues 9–11 (DSH) and 35–36 (HS). Residue His-43 coordinates a divalent metal cation. 57–59 (DIG) contributes to the 4-CDP-2-C-methyl-D-erythritol 2-phosphate binding site.

It belongs to the IspF family. As to quaternary structure, homotrimer. A divalent metal cation is required as a cofactor.

It catalyses the reaction 4-CDP-2-C-methyl-D-erythritol 2-phosphate = 2-C-methyl-D-erythritol 2,4-cyclic diphosphate + CMP. It participates in isoprenoid biosynthesis; isopentenyl diphosphate biosynthesis via DXP pathway; isopentenyl diphosphate from 1-deoxy-D-xylulose 5-phosphate: step 4/6. In terms of biological role, involved in the biosynthesis of isopentenyl diphosphate (IPP) and dimethylallyl diphosphate (DMAPP), two major building blocks of isoprenoid compounds. Catalyzes the conversion of 4-diphosphocytidyl-2-C-methyl-D-erythritol 2-phosphate (CDP-ME2P) to 2-C-methyl-D-erythritol 2,4-cyclodiphosphate (ME-CPP) with a corresponding release of cytidine 5-monophosphate (CMP). This chain is 2-C-methyl-D-erythritol 2,4-cyclodiphosphate synthase, found in Koribacter versatilis (strain Ellin345).